The following is a 98-amino-acid chain: NADH-ubiquinone oxidoreductase chain 4L (98 aa).

Transmembrane regions (helical) follow at residues 2–22 (PSIF…MLIF), 37–57 (MLSM…TMSF), and 61–81 (ILLL…LVTV).

The protein belongs to the complex I subunit 4L family. As to quaternary structure, core subunit of respiratory chain NADH dehydrogenase (Complex I) which is composed of 45 different subunits.

Its subcellular location is the mitochondrion inner membrane. It catalyses the reaction a ubiquinone + NADH + 5 H(+)(in) = a ubiquinol + NAD(+) + 4 H(+)(out). Functionally, core subunit of the mitochondrial membrane respiratory chain NADH dehydrogenase (Complex I) which catalyzes electron transfer from NADH through the respiratory chain, using ubiquinone as an electron acceptor. Part of the enzyme membrane arm which is embedded in the lipid bilayer and involved in proton translocation. The chain is NADH-ubiquinone oxidoreductase chain 4L (MT-ND4L) from Varecia rubra (Red ruffed lemur).